Consider the following 689-residue polypeptide: Long-chain fatty acid transport protein 5 (689 aa).

The Cytoplasmic portion of the chain corresponds to 1–29 (MGIWKKLTLLLLLLLLVGLGQPPWPAAMA). 2 consecutive transmembrane segments (helical) span residues 30 to 50 (LALR…LALL) and 55 to 75 (ISSW…LFLL). Residues 76–689 (PLQPPPGLRW…QAVCEGTWNL (614 aa)) lie on the Cytoplasmic side of the membrane. 292–303 (IFTSGTTGLPKP) contacts AMP.

Belongs to the ATP-dependent AMP-binding enzyme family. As to expression, liver-specific (at protein level). In liver expressed in a periportal distribution.

It localises to the endoplasmic reticulum membrane. The protein resides in the microsome. Its subcellular location is the cell membrane. The catalysed reaction is a fatty acid(in) = a fatty acid(out). It catalyses the reaction cholate + ATP + CoA = choloyl-CoA + AMP + diphosphate. It carries out the reaction (25R)-3alpha,7alpha,12alpha-trihydroxy-5beta-cholestan-26-oate + ATP + CoA = (25R)-3alpha,7alpha,12alpha-trihydroxy-5beta-cholestan-26-oyl-CoA + AMP + diphosphate. The enzyme catalyses chenodeoxycholate + ATP + CoA = chenodeoxycholoyl-CoA + AMP + diphosphate. The catalysed reaction is deoxycholate + ATP + CoA = deoxycholoyl-CoA + AMP + diphosphate. It catalyses the reaction lithocholate + ATP + CoA = lithocholoyl-CoA + AMP + diphosphate. It carries out the reaction a very long-chain fatty acid + ATP + CoA = a very long-chain fatty acyl-CoA + AMP + diphosphate. The enzyme catalyses tetracosanoate + ATP + CoA = tetracosanoyl-CoA + AMP + diphosphate. The catalysed reaction is hexacosanoate + ATP + CoA = hexacosanoyl-CoA + AMP + diphosphate. It catalyses the reaction a long-chain fatty acid + ATP + CoA = a long-chain fatty acyl-CoA + AMP + diphosphate. It carries out the reaction octadecanoate + ATP + CoA = octadecanoyl-CoA + AMP + diphosphate. The enzyme catalyses eicosanoate + ATP + CoA = eicosanoyl-CoA + AMP + diphosphate. Its function is as follows. Mediates the import of long-chain fatty acids (LCFA) by facilitating their transport across cell membranes. Also catalyzes the ATP-dependent formation of fatty acyl-CoA using LCFA and very-long-chain fatty acids (VLCFA) as substrates. Mainly functions as a bile acyl-CoA synthetase catalyzing the activation of bile acids via ATP-dependent formation of bile acid CoA thioesters which is necessary for their subsequent conjugation with glycine or taurine. Both primary bile acids (cholic acid and chenodeoxycholic acid) and secondary bile acids (deoxycholic acid and lithocholic acid) are the principal substrates. In vitro, activates 3-alpha,7-alpha,12-alpha-trihydroxy-5-beta-cholestanate ((25R)-3alpha,7alpha,12alpha-trihydroxy-5beta-cholestan-26-oate or THCA), the C27 precursor of cholic acid deriving from the de novo synthesis from cholesterol. Plays an important role in hepatic fatty acid uptake and bile acid reconjugation and recycling but not in de novo synthesis of bile acids. The protein is Long-chain fatty acid transport protein 5 (Slc27a5) of Mus musculus (Mouse).